Reading from the N-terminus, the 291-residue chain is Neugrin (291 aa).

Positions 1-15 are cleaved as a signal peptide; it reads MAVTLSLLLGGRVCA. Disordered stretches follow at residues 26-48 and 155-270; these read GVAGPGPIGREPDPDSDWEPEER and GSGN…DNFS. A Phosphoserine modification is found at Ser41. 2 N-linked (GlcNAc...) asparagine glycosylation sites follow: Asn158 and Asn186. A compositionally biased stretch (polar residues) spans 236 to 246; that stretch reads KYSSDSESPRG. Residue Asn268 is glycosylated (N-linked (GlcNAc...) asparagine).

It belongs to the neugrin family. As to quaternary structure, forms a regulatory protein-RNA complex, consisting of RCC1L, NGRN, RPUSD3, RPUSD4, TRUB2, FASTKD2 and 16S mt-rRNA. Interacts with 16S mt-rRNA; this interaction is direct. Expressed at high levels in heart, brain and skeletal muscle. In brain, mainly expressed in neurons rather than glial cells.

The protein resides in the nucleus. It localises to the secreted. It is found in the mitochondrion membrane. In terms of biological role, plays an essential role in mitochondrial ribosome biogenesis. As a component of a functional protein-RNA module, consisting of RCC1L, NGRN, RPUSD3, RPUSD4, TRUB2, FASTKD2 and 16S mitochondrial ribosomal RNA (16S mt-rRNA), controls 16S mt-rRNA abundance and is required for intra-mitochondrial translation of core subunits of the oxidative phosphorylation system. This Homo sapiens (Human) protein is Neugrin.